A 201-amino-acid chain; its full sequence is UPF0301 protein BP0319 (201 aa).

It belongs to the UPF0301 (AlgH) family.

This Bordetella pertussis (strain Tohama I / ATCC BAA-589 / NCTC 13251) protein is UPF0301 protein BP0319.